Reading from the N-terminus, the 218-residue chain is Cell division protein SepF (218 aa).

The disordered stretch occupies residues 25 to 115 (DVAASTDNVI…IANRREQYQQ (91 aa)). Over residues 29–43 (STDNVIPRSQQSVRA) the composition is skewed to polar residues. Residues 47-63 (PKQEPRNNHVQQDHQAR) show a composition bias toward basic and acidic residues.

It belongs to the SepF family. As to quaternary structure, homodimer. Interacts with FtsZ.

It is found in the cytoplasm. Cell division protein that is part of the divisome complex and is recruited early to the Z-ring. Probably stimulates Z-ring formation, perhaps through the cross-linking of FtsZ protofilaments. Its function overlaps with FtsA. The sequence is that of Cell division protein SepF from Streptococcus pyogenes serotype M12 (strain MGAS2096).